A 394-amino-acid polypeptide reads, in one-letter code: UPF0229 protein RBAM_009260 (394 aa).

It belongs to the UPF0229 family.

In Bacillus velezensis (strain DSM 23117 / BGSC 10A6 / LMG 26770 / FZB42) (Bacillus amyloliquefaciens subsp. plantarum), this protein is UPF0229 protein RBAM_009260.